Consider the following 613-residue polypeptide: Dihydroxy-acid dehydratase (613 aa).

Residue Asp-81 coordinates Mg(2+). Position 122 (Cys-122) interacts with [2Fe-2S] cluster. Residues Asp-123 and Lys-124 each coordinate Mg(2+). Lys-124 carries the N6-carboxylysine modification. Residue Cys-195 participates in [2Fe-2S] cluster binding. Position 491 (Glu-491) interacts with Mg(2+). The active-site Proton acceptor is Ser-517.

It belongs to the IlvD/Edd family. As to quaternary structure, homodimer. [2Fe-2S] cluster serves as cofactor. It depends on Mg(2+) as a cofactor.

It carries out the reaction (2R)-2,3-dihydroxy-3-methylbutanoate = 3-methyl-2-oxobutanoate + H2O. It catalyses the reaction (2R,3R)-2,3-dihydroxy-3-methylpentanoate = (S)-3-methyl-2-oxopentanoate + H2O. It participates in amino-acid biosynthesis; L-isoleucine biosynthesis; L-isoleucine from 2-oxobutanoate: step 3/4. The protein operates within amino-acid biosynthesis; L-valine biosynthesis; L-valine from pyruvate: step 3/4. Functions in the biosynthesis of branched-chain amino acids. Catalyzes the dehydration of (2R,3R)-2,3-dihydroxy-3-methylpentanoate (2,3-dihydroxy-3-methylvalerate) into 2-oxo-3-methylpentanoate (2-oxo-3-methylvalerate) and of (2R)-2,3-dihydroxy-3-methylbutanoate (2,3-dihydroxyisovalerate) into 2-oxo-3-methylbutanoate (2-oxoisovalerate), the penultimate precursor to L-isoleucine and L-valine, respectively. The protein is Dihydroxy-acid dehydratase of Aeromonas salmonicida (strain A449).